The primary structure comprises 83 residues: Putative defensin-like protein 131 (83 aa).

The first 34 residues, 1–34 (MAKNRVLTIFYCTIYYCICFKYVLLGMVVEKTQG), serve as a signal peptide directing secretion. 4 disulfide bridges follow: Cys37/Cys83, Cys46/Cys65, Cys51/Cys77, and Cys55/Cys79.

Belongs to the DEFL family.

The protein localises to the secreted. The protein is Putative defensin-like protein 131 (LCR29) of Arabidopsis thaliana (Mouse-ear cress).